The chain runs to 270 residues: Basigin (270 aa).

The signal sequence occupies residues 1 to 21; that stretch reads MAAVLFALLALALLRAGGASA. The 82-residue stretch at 22–103 folds into the Ig-like C2-type domain; the sequence is AAGTVTTSVQ…TGEATLTVDG (82 aa). Over 22–207 the chain is Extracellular; that stretch reads AAGTVTTSVQ…VTLRVRSRLA (186 aa). Disulfide bonds link cysteine 41–cysteine 87 and cysteine 126–cysteine 185. N-linked (GlcNAc...) asparagine glycosylation is found at asparagine 44, asparagine 75, asparagine 152, and asparagine 186. The Ig-like V-type domain maps to 105–203; sequence PRIKAVKKSE…DAAVVTLRVR (99 aa). The helical transmembrane segment at 208-228 threads the bilayer; sequence ALWPFLGIVAEVLVLVTVIFI. The Cytoplasmic portion of the chain corresponds to 229–270; that stretch reads YEKRRKPDEVLDDEDAGAAPLKSSGHHVNDDKGKNVRQRNAS. Positions 239-270 are disordered; sequence LDDEDAGAAPLKSSGHHVNDDKGKNVRQRNAS. Serine 252 bears the Phosphoserine mark.

Homooligomer. Interacts with VEGFA, KDR/VEGFR2, PPIA/CYPA, SLC1A3, SLC16A12, SLC16A11, ATP1B2, MAG, L1CAM and AJAP1. Interacts with PPIL2; regulates BSG transport to the cell membrane. Interacts with XKR8; promoting its localization at the cell membrane. Interacts with SLC16A3; interaction mediates SLC16A3 targeting to the plasma membrane. Interacts with SLC16A1; interaction mediates SLC16A1 targeting to the plasma membrane. Interacts with SLC16A6; this interaction mediates targeting to the plasma membrane.

It localises to the cell membrane. It is found in the endoplasmic reticulum membrane. The protein localises to the basolateral cell membrane. In terms of biological role, signaling receptor for cyclophilins, essential for PPIA/CYPA and PPIB/CYPB-dependent signaling related to chemotaxis and adhesion of immune cells. Plays an important role in targeting the monocarboxylate transporters SLC16A1/GLUT1, SLC16A3, SLC16A8, SLC16A11 and SLC16A12 to the plasma membrane. Acts as a coreceptor for vascular endothelial growth factor receptor 2 (KDR/VEGFR2) in endothelial cells enhancing its VEGFA-mediated activation and downstream signaling. Promotes angiogenesis through EPAS1/HIF2A-mediated up-regulation of VEGFA and KDR/VEGFR2 in endothelial cells. In Oryctolagus cuniculus (Rabbit), this protein is Basigin (BSG).